A 37-amino-acid polypeptide reads, in one-letter code: Large ribosomal subunit protein bL36 (37 aa).

The protein belongs to the bacterial ribosomal protein bL36 family.

This chain is Large ribosomal subunit protein bL36, found in Caldicellulosiruptor saccharolyticus (strain ATCC 43494 / DSM 8903 / Tp8T 6331).